Reading from the N-terminus, the 414-residue chain is Gamma-glutamyl phosphate reductase (414 aa).

It belongs to the gamma-glutamyl phosphate reductase family.

It is found in the cytoplasm. The enzyme catalyses L-glutamate 5-semialdehyde + phosphate + NADP(+) = L-glutamyl 5-phosphate + NADPH + H(+). The protein operates within amino-acid biosynthesis; L-proline biosynthesis; L-glutamate 5-semialdehyde from L-glutamate: step 2/2. Functionally, catalyzes the NADPH-dependent reduction of L-glutamate 5-phosphate into L-glutamate 5-semialdehyde and phosphate. The product spontaneously undergoes cyclization to form 1-pyrroline-5-carboxylate. This Geobacillus thermodenitrificans (strain NG80-2) protein is Gamma-glutamyl phosphate reductase.